The following is a 449-amino-acid chain: Glucose-6-phosphate isomerase (449 aa).

Residue Glu-291 is the Proton donor of the active site. Catalysis depends on residues His-312 and Lys-426.

The protein belongs to the GPI family.

The protein resides in the cytoplasm. It carries out the reaction alpha-D-glucose 6-phosphate = beta-D-fructose 6-phosphate. It functions in the pathway carbohydrate biosynthesis; gluconeogenesis. Its pathway is carbohydrate degradation; glycolysis; D-glyceraldehyde 3-phosphate and glycerone phosphate from D-glucose: step 2/4. Functionally, catalyzes the reversible isomerization of glucose-6-phosphate to fructose-6-phosphate. The protein is Glucose-6-phosphate isomerase of Streptococcus pneumoniae (strain ATCC BAA-255 / R6).